Consider the following 212-residue polypeptide: uncharacterized protein (212 aa).

2 disordered regions span residues 1–148 (MEKD…LNDL) and 168–190 (EVVT…LSED). Over residues 61–70 (KELESEDQGK) the composition is skewed to basic and acidic residues. Residues 71 to 85 (DPSSNAEDASCQKNL) show a composition bias toward polar residues. Composition is skewed to basic and acidic residues over residues 99-115 (LGHE…KSDL), 124-144 (EGEH…ESIK), and 168-180 (EVVT…EKPS).

This is an uncharacterized protein from Homo sapiens (Human).